The primary structure comprises 766 residues: Tetratricopeptide repeat protein 14 (766 aa).

The segment at Leu35–Glu55 is disordered. An S1 motif domain is found at Gly125–Tyr207. 4 TPR repeats span residues Ser209 to Ser242, Ala306 to Asn339, Glu341 to His373, and Cys381 to Phe414. Residues Glu463–Pro743 form a disordered region. The segment covering Ser475 to Ser496 has biased composition (low complexity). Over residues Ser497 to Arg506 the composition is skewed to basic residues. Positions Pro539 to Lys550 are enriched in polar residues. Residues Gln551–Arg562 are compositionally biased toward basic and acidic residues. The span at Phe594–Ser605 shows a compositional bias: polar residues. 2 stretches are compositionally biased toward basic and acidic residues: residues Lys606–His616 and Asn629–Glu657. Residues Val661–Ser673 are compositionally biased toward polar residues. Ser666 carries the phosphoserine modification. Positions Arg707–Val738 are enriched in basic and acidic residues.

It belongs to the TTC14 family.

The sequence is that of Tetratricopeptide repeat protein 14 from Mus musculus (Mouse).